The following is a 419-amino-acid chain: Esterase FrsA (419 aa).

It belongs to the FrsA family.

It catalyses the reaction a carboxylic ester + H2O = an alcohol + a carboxylate + H(+). Its function is as follows. Catalyzes the hydrolysis of esters. This Photobacterium profundum (strain SS9) protein is Esterase FrsA.